The sequence spans 353 residues: Photosystem II protein D1 (353 aa).

The residue at position 2 (T2) is an N-acetylthreonine. T2 carries the phosphothreonine modification. 3 helical membrane-spanning segments follow: residues 29-46 (YIGWFGVLMIPTLLTATS), 118-133 (HFLLGVACYMGREWEL), and 142-156 (WIAVAYSAPVAAATA). Position 118 (H118) interacts with chlorophyll a. Y126 contacts pheophytin a. Residues D170 and E189 each contribute to the [CaMn4O5] cluster site. A helical transmembrane segment spans residues 197–218 (FHMLGVAGVFGGSLFSAMHGSL). Residue H198 participates in chlorophyll a binding. Residues H215 and 264–265 (SF) contribute to the a quinone site. A Fe cation-binding site is contributed by H215. H272 contributes to the Fe cation binding site. The chain crosses the membrane as a helical span at residues 274–288 (FLAAWPVVGIWFTAL). [CaMn4O5] cluster contacts are provided by H332, E333, D342, and A344. A propeptide spanning residues 345–353 (AVEVPSING) is cleaved from the precursor.

It belongs to the reaction center PufL/M/PsbA/D family. PSII is composed of 1 copy each of membrane proteins PsbA, PsbB, PsbC, PsbD, PsbE, PsbF, PsbH, PsbI, PsbJ, PsbK, PsbL, PsbM, PsbT, PsbX, PsbY, PsbZ, Psb30/Ycf12, at least 3 peripheral proteins of the oxygen-evolving complex and a large number of cofactors. It forms dimeric complexes. It depends on The D1/D2 heterodimer binds P680, chlorophylls that are the primary electron donor of PSII, and subsequent electron acceptors. It shares a non-heme iron and each subunit binds pheophytin, quinone, additional chlorophylls, carotenoids and lipids. D1 provides most of the ligands for the Mn4-Ca-O5 cluster of the oxygen-evolving complex (OEC). There is also a Cl(-1) ion associated with D1 and D2, which is required for oxygen evolution. The PSII complex binds additional chlorophylls, carotenoids and specific lipids. as a cofactor. Tyr-161 forms a radical intermediate that is referred to as redox-active TyrZ, YZ or Y-Z. In terms of processing, C-terminally processed by CTPA; processing is essential to allow assembly of the oxygen-evolving complex and thus photosynthetic growth.

The protein localises to the plastid. It is found in the chloroplast thylakoid membrane. The enzyme catalyses 2 a plastoquinone + 4 hnu + 2 H2O = 2 a plastoquinol + O2. Functionally, photosystem II (PSII) is a light-driven water:plastoquinone oxidoreductase that uses light energy to abstract electrons from H(2)O, generating O(2) and a proton gradient subsequently used for ATP formation. It consists of a core antenna complex that captures photons, and an electron transfer chain that converts photonic excitation into a charge separation. The D1/D2 (PsbA/PsbD) reaction center heterodimer binds P680, the primary electron donor of PSII as well as several subsequent electron acceptors. The protein is Photosystem II protein D1 of Triticum aestivum (Wheat).